Here is a 312-residue protein sequence, read N- to C-terminus: Pseudouridine-5'-phosphate glycosidase 2 (312 aa).

E31 (proton donor) is an active-site residue. Positions 93 and 113 each coordinate substrate. Residue D145 coordinates Mn(2+). 147–149 (SAD) contacts substrate. K166 serves as the catalytic Nucleophile.

This sequence belongs to the pseudouridine-5'-phosphate glycosidase family. In terms of assembly, homotrimer. Requires Mn(2+) as cofactor.

It catalyses the reaction D-ribose 5-phosphate + uracil = psi-UMP + H2O. In terms of biological role, catalyzes the reversible cleavage of pseudouridine 5'-phosphate (PsiMP) to ribose 5-phosphate and uracil. Functions biologically in the cleavage direction, as part of a pseudouridine degradation pathway. The protein is Pseudouridine-5'-phosphate glycosidase 2 of Photorhabdus laumondii subsp. laumondii (strain DSM 15139 / CIP 105565 / TT01) (Photorhabdus luminescens subsp. laumondii).